A 412-amino-acid polypeptide reads, in one-letter code: Arginine biosynthesis bifunctional protein ArgJ (412 aa).

Substrate contacts are provided by threonine 155, lysine 181, threonine 192, glutamate 279, asparagine 407, and serine 412. Threonine 192 functions as the Nucleophile in the catalytic mechanism.

Belongs to the ArgJ family. In terms of assembly, heterotetramer of two alpha and two beta chains.

Its subcellular location is the cytoplasm. It carries out the reaction N(2)-acetyl-L-ornithine + L-glutamate = N-acetyl-L-glutamate + L-ornithine. The catalysed reaction is L-glutamate + acetyl-CoA = N-acetyl-L-glutamate + CoA + H(+). Its pathway is amino-acid biosynthesis; L-arginine biosynthesis; L-ornithine and N-acetyl-L-glutamate from L-glutamate and N(2)-acetyl-L-ornithine (cyclic): step 1/1. It participates in amino-acid biosynthesis; L-arginine biosynthesis; N(2)-acetyl-L-ornithine from L-glutamate: step 1/4. In terms of biological role, catalyzes two activities which are involved in the cyclic version of arginine biosynthesis: the synthesis of N-acetylglutamate from glutamate and acetyl-CoA as the acetyl donor, and of ornithine by transacetylation between N(2)-acetylornithine and glutamate. This is Arginine biosynthesis bifunctional protein ArgJ from Aromatoleum aromaticum (strain DSM 19018 / LMG 30748 / EbN1) (Azoarcus sp. (strain EbN1)).